We begin with the raw amino-acid sequence, 331 residues long: Glutaminase (331 aa).

Substrate-binding residues include Ser77, Asn129, Glu173, Asn180, Tyr204, Tyr256, and Val274.

This sequence belongs to the glutaminase family. In terms of assembly, homotetramer.

It carries out the reaction L-glutamine + H2O = L-glutamate + NH4(+). This is Glutaminase from Oceanobacillus iheyensis (strain DSM 14371 / CIP 107618 / JCM 11309 / KCTC 3954 / HTE831).